The chain runs to 462 residues: Glycerol-3-phosphate dehydrogenase [NAD(+)] GPDHC1, cytosolic (462 aa).

NAD(+)-binding positions include 48–53 (GAGAWG), Lys196, and Ala235. Lys196 contributes to the substrate binding site. Lys285 (proton acceptor) is an active-site residue. 2 residues coordinate NAD(+): Arg347 and Gln375. 347-348 (RN) contacts substrate.

Belongs to the NAD-dependent glycerol-3-phosphate dehydrogenase family. In terms of tissue distribution, expressed in roots, leaves, flowers and siliques.

It localises to the cytoplasm. The protein localises to the cytosol. The catalysed reaction is sn-glycerol 3-phosphate + NAD(+) = dihydroxyacetone phosphate + NADH + H(+). Functionally, involved in cell redox homeostasis. Required for maintaining a steady state cellular NADH/NAD(+) ratio through a mitochondrial glycerol-3-phosphate redox shuttle. May function with the mitochondrial FAD-dependent glycerol-3-phosphate dehydrogenase SDP6 to shuttle reducing equivalents into the mitochondria for respiration. The polypeptide is Glycerol-3-phosphate dehydrogenase [NAD(+)] GPDHC1, cytosolic (GPDHC1) (Arabidopsis thaliana (Mouse-ear cress)).